The following is a 73-amino-acid chain: Large ribosomal subunit protein bL31 (73 aa).

It belongs to the bacterial ribosomal protein bL31 family. Type A subfamily. As to quaternary structure, part of the 50S ribosomal subunit.

Functionally, binds the 23S rRNA. In Rhizobium rhizogenes (strain K84 / ATCC BAA-868) (Agrobacterium radiobacter), this protein is Large ribosomal subunit protein bL31.